The sequence spans 158 residues: 2-C-methyl-D-erythritol 2,4-cyclodiphosphate synthase (158 aa).

Positions 9 and 11 each coordinate a divalent metal cation. 4-CDP-2-C-methyl-D-erythritol 2-phosphate contacts are provided by residues 9-11 and 35-36; these read DVH and HS. H43 serves as a coordination point for a divalent metal cation. Residues 57–59, 62–66, 133–136, F140, and R143 contribute to the 4-CDP-2-C-methyl-D-erythritol 2-phosphate site; these read DIG, FPDTD, and TTTE.

The protein belongs to the IspF family. In terms of assembly, homotrimer. Requires a divalent metal cation as cofactor.

The catalysed reaction is 4-CDP-2-C-methyl-D-erythritol 2-phosphate = 2-C-methyl-D-erythritol 2,4-cyclic diphosphate + CMP. It participates in isoprenoid biosynthesis; isopentenyl diphosphate biosynthesis via DXP pathway; isopentenyl diphosphate from 1-deoxy-D-xylulose 5-phosphate: step 4/6. Its function is as follows. Involved in the biosynthesis of isopentenyl diphosphate (IPP) and dimethylallyl diphosphate (DMAPP), two major building blocks of isoprenoid compounds. Catalyzes the conversion of 4-diphosphocytidyl-2-C-methyl-D-erythritol 2-phosphate (CDP-ME2P) to 2-C-methyl-D-erythritol 2,4-cyclodiphosphate (ME-CPP) with a corresponding release of cytidine 5-monophosphate (CMP). In Actinobacillus succinogenes (strain ATCC 55618 / DSM 22257 / CCUG 43843 / 130Z), this protein is 2-C-methyl-D-erythritol 2,4-cyclodiphosphate synthase.